The primary structure comprises 387 residues: Phosphoglycerate kinase (387 aa).

Substrate-binding positions include 21 to 23 (DLN), R36, 59 to 62 (HLGR), R113, and R146. ATP is bound by residues K197, E314, and 340–343 (GGDT).

The protein belongs to the phosphoglycerate kinase family. Monomer.

Its subcellular location is the cytoplasm. The enzyme catalyses (2R)-3-phosphoglycerate + ATP = (2R)-3-phospho-glyceroyl phosphate + ADP. Its pathway is carbohydrate degradation; glycolysis; pyruvate from D-glyceraldehyde 3-phosphate: step 2/5. In Pseudomonas fluorescens (strain Pf0-1), this protein is Phosphoglycerate kinase.